A 353-amino-acid chain; its full sequence is Inactive ubiquitin thioesterase OTULINL (353 aa).

The required for membrane binding stretch occupies residues Met-1–Lys-80. Residues Lys-125 to Phe-353 form the OTU domain.

Belongs to the peptidase C65 family. Otulin subfamily. As to quaternary structure, does not bind ubiquitin or ubiquitin-like proteins.

Its subcellular location is the cytoplasm. It is found in the endoplasmic reticulum membrane. It localises to the nucleus envelope. Its function is as follows. Lacks deubiquitinase activity. The chain is Inactive ubiquitin thioesterase OTULINL from Mus musculus (Mouse).